The chain runs to 460 residues: Argininosuccinate lyase (460 aa).

This sequence belongs to the lyase 1 family. Argininosuccinate lyase subfamily.

It localises to the cytoplasm. It carries out the reaction 2-(N(omega)-L-arginino)succinate = fumarate + L-arginine. It functions in the pathway amino-acid biosynthesis; L-arginine biosynthesis; L-arginine from L-ornithine and carbamoyl phosphate: step 3/3. The protein is Argininosuccinate lyase of Alteromonas mediterranea (strain DSM 17117 / CIP 110805 / LMG 28347 / Deep ecotype).